A 199-amino-acid chain; its full sequence is 3-isopropylmalate dehydratase small subunit (199 aa).

It belongs to the LeuD family. LeuD type 1 subfamily. As to quaternary structure, heterodimer of LeuC and LeuD.

The catalysed reaction is (2R,3S)-3-isopropylmalate = (2S)-2-isopropylmalate. It functions in the pathway amino-acid biosynthesis; L-leucine biosynthesis; L-leucine from 3-methyl-2-oxobutanoate: step 2/4. In terms of biological role, catalyzes the isomerization between 2-isopropylmalate and 3-isopropylmalate, via the formation of 2-isopropylmaleate. This chain is 3-isopropylmalate dehydratase small subunit, found in Mycobacteroides abscessus (strain ATCC 19977 / DSM 44196 / CCUG 20993 / CIP 104536 / JCM 13569 / NCTC 13031 / TMC 1543 / L948) (Mycobacterium abscessus).